A 426-amino-acid chain; its full sequence is Gamma-glutamylputrescine oxidoreductase (426 aa).

The protein belongs to the gamma-glutamylputrescine oxidoreductase family.

The catalysed reaction is gamma-L-glutamylputrescine + O2 + H2O = 4-(gamma-L-glutamylamino)butanal + H2O2 + NH4(+). It participates in amine and polyamine degradation; putrescine degradation; 4-aminobutanoate from putrescine: step 2/4. Functionally, involved in the breakdown of putrescine via the oxidation of L-glutamylputrescine. The chain is Gamma-glutamylputrescine oxidoreductase (puuB) from Escherichia coli (strain K12).